The following is an 885-amino-acid chain: Cadherin-related family member 3 (885 aa).

The first 19 residues, 1 to 19, serve as a signal peptide directing secretion; it reads MQEAIILLALLGAMSGGEA. Over 20 to 713 the chain is Extracellular; it reads LHLILLPATG…VYSPSAWYVP (694 aa). 6 Cadherin domains span residues 23 to 132, 136 to 236, 237 to 344, 346 to 466, 462 to 566, and 567 to 695; these read ILLP…PPQF, LAEG…VPRF, TSPT…NPAT, QKFT…RPSY, DRPS…KPIC, and TPNS…RPRV. N-linked (GlcNAc...) asparagine glycosylation is found at Asn-186 and Asn-257. An N-linked (GlcNAc...) asparagine glycan is attached at Asn-624. The chain crosses the membrane as a helical span at residues 714-734; it reads FVITLGSILLLGLLVYLVVLL. Residues 735–885 lie on the Cytoplasmic side of the membrane; sequence AKAIHRHCPC…RAYPKPHPGK (151 aa). Residues 808 to 885 form a disordered region; it reads MPKWKESSHQ…RAYPKPHPGK (78 aa).

In terms of assembly, (Microbial infection) Interacts (via N-terminus) with human rhinovirus C capsid proteins VP1, VP2 and VP3. Expressed in bronchial epithelium from adults and in fetal lung tissue.

It is found in the cell membrane. Its function is as follows. Cadherins are calcium-dependent cell adhesion proteins. They preferentially interact with themselves in a homophilic manner in connecting cells; cadherins may thus contribute to the sorting of heterogeneous cell types. Functionally, (Microbial infection) Acts as a receptor for human rhinovirus C. This is Cadherin-related family member 3 (CDHR3) from Homo sapiens (Human).